A 1503-amino-acid polypeptide reads, in one-letter code: Lysine-specific demethylase 5B-B (1503 aa).

One can recognise a JmjN domain in the interval 15–56 (CPVFEPSWEEFKDPFAFINKIRPIAEKTGICKVRPPPDWQPP). The ARID domain maps to 80–170 (TRVKLNFLDQ…ILYPYNLFQS (91 aa)). Residues 202–211 (VPLQPSNTSA) are compositionally biased toward polar residues. Disordered regions lie at residues 202–223 (VPLQPSNTSAPARRAKRMKTES) and 268–287 (IKELNPEPEKSKPKKKNIPP). Basic and acidic residues predominate over residues 268–278 (IKELNPEPEKS). The PHD-type 1 zinc-finger motif lies at 295 to 345 (LYVCLVCGKGNDEDRLLLCDGCDDSYHTFCLIPPLTDVPKGDWRCPKCLTQ). The region spanning 439–605 (KYLQCGWNLN…LGRQCVDHYR (167 aa)) is the JmjC domain. Residues histidine 485, aspartate 488, and histidine 573 each contribute to the Fe cation site. A PHD-type 2 zinc finger spans residues 1168–1216 (LKVCVCQKPAMGAMLQCELCRDAFHSVCVRGPSDPLDPEAWLCPLCLRS). Disordered stretches follow at residues 1362-1381 (TNTSHAEHKSYLTPPQTETD) and 1403-1442 (ERGTKLKSKKQRMMGVEKRRERKAASVSASDMSQSEDSEE). The PHD-type 3 zinc-finger motif lies at 1444–1497 (MTLCPAESCLQPEGEEVDWVQCDCCNRWFHMICVGVSAELAAEEDYMCVSCSTS).

This sequence belongs to the JARID1 histone demethylase family. The cofactor is Fe(2+).

The protein localises to the nucleus. It catalyses the reaction N(6),N(6),N(6)-trimethyl-L-lysyl(4)-[histone H3] + 3 2-oxoglutarate + 3 O2 = L-lysyl(4)-[histone H3] + 3 formaldehyde + 3 succinate + 3 CO2. Functionally, histone demethylase that demethylates 'Lys-4' of histone H3, thereby playing a central role in histone code. Does not demethylate histone H3 'Lys-9' or H3 'Lys-27'. Demethylates trimethylated, dimethylated and monomethylated H3 'Lys-4'. Acts as a transcriptional corepressor. This chain is Lysine-specific demethylase 5B-B (kdm5bb), found in Danio rerio (Zebrafish).